Here is a 512-residue protein sequence, read N- to C-terminus: Amidase 2 (512 aa).

Catalysis depends on charge relay system residues K122 and S197. Residues S197 and 218–221 (IGGS) contribute to the substrate site. S221 serves as the catalytic Acyl-ester intermediate.

It belongs to the amidase family.

It catalyses the reaction a monocarboxylic acid amide + H2O = a monocarboxylate + NH4(+). The protein operates within xenobiotic degradation. Its function is as follows. Amidase; part of the Fusarium detoxification of benzoxazolinone cluster 2 (FDB2) involved in the degradation of benzoxazolinones produced by the host plant. Maize, wheat, and rye produce the 2 benzoxazinone phytoanticipins 2,4-dihy-droxy-7-methoxy-1,4-benzoxazin-3-one (DIMBOA) and 2,4-dihydroxy-1,4-benzoxazin-3-one (DIBOA) that, due to their inherent instability once released, spontaneously degrade to the more stable corresponding benzoxazolinones, 6-methoxy-2-benzoxazolinone (MBOA) and 2-benzoxazolinone (BOA), respectively. The first step in the detoxification of benzoxazolinones involves the hydrolysis of the cyclic ester bond of benzoxazolinones by the FDB1 cluster gamma-lactamase MBL1 to aminophenols. MBL1 is able to convert BOA into 2-aminophenol (2-AP), as well as MBOA into 5-methoxy-2-aminophenol (2-AMP). The FDB2 cluster N-malonyltransferase FDB2/NAT1 then metabolizes aminophenols via N-malonylation to non-toxic malonamic acids. FDB2/NAT1 converts 2-AP into N-(2-hydroxyphenyl) malonamic acid (HPMA) and 2-AMP into N-(2-hydroxy-4-methoxyphenyl) malonamic acid (HMPMA). The duplicated dienlactone hydrolases DLH1 and DLH2 may provide redundant function for hydrolyzing the lactone moiety in the BOA molecule. The roles of the amidases an other enzymes encoded by the 2 FDB clusters have not been identified so far. The polypeptide is Amidase 2 (Gibberella moniliformis (strain M3125 / FGSC 7600) (Maize ear and stalk rot fungus)).